The chain runs to 999 residues: Hypoxia up-regulated protein 1 (999 aa).

The first 32 residues, 1–32 (MAATVRRQRPRRLLCWALVAVLLADLLALSDT), serve as a signal peptide directing secretion. Asn-155, Asn-222, and Asn-515 each carry an N-linked (GlcNAc...) asparagine glycan. Ser-567 carries the post-translational modification Phosphoserine. The disordered stretch occupies residues 567–694 (SPEEESTLTK…KKPKPARKQK (128 aa)). Over residues 574–583 (LTKLGNTISS) the composition is skewed to polar residues. N-linked (GlcNAc...) asparagine glycosylation occurs at Asn-596. Composition is skewed to basic and acidic residues over residues 611 to 626 (GSKD…KEEA) and 641 to 668 (PKGD…KPNE). Over residues 669–680 (KGQAGPEGAAPA) the composition is skewed to low complexity. N-linked (GlcNAc...) asparagine glycans are attached at residues Asn-830, Asn-862, and Asn-869. Lys-883 carries the post-translational modification N6-acetyllysine. Residues 909–999 (AKFTKPRPRP…QKRPSKNDEL (91 aa)) are disordered. Asn-922 and Asn-931 each carry an N-linked (GlcNAc...) asparagine glycan. Over residues 949-962 (EEAKPILEPDKEET) the composition is skewed to basic and acidic residues. The short motif at 996–999 (NDEL) is the Prevents secretion from ER element.

Belongs to the heat shock protein 70 family. Part of a large chaperone multiprotein complex comprising DNAJB11, HSP90B1, HSPA5, HYOU, PDIA2, PDIA4, PDIA6, PPIB, SDF2L1, UGGT1 and very small amounts of ERP29, but not, or at very low levels, CALR nor CANX.

It localises to the endoplasmic reticulum lumen. In terms of biological role, has a pivotal role in cytoprotective cellular mechanisms triggered by oxygen deprivation. Promotes HSPA5/BiP-mediated ATP nucleotide exchange and thereby activates the unfolded protein response (UPR) pathway in the presence of endoplasmic reticulum stress. May play a role as a molecular chaperone and participate in protein folding. This is Hypoxia up-regulated protein 1 (Hyou1) from Mus musculus (Mouse).